A 208-amino-acid chain; its full sequence is Protein-L-isoaspartate O-methyltransferase (208 aa).

Ser-59 is an active-site residue.

Belongs to the methyltransferase superfamily. L-isoaspartyl/D-aspartyl protein methyltransferase family.

It is found in the cytoplasm. It carries out the reaction [protein]-L-isoaspartate + S-adenosyl-L-methionine = [protein]-L-isoaspartate alpha-methyl ester + S-adenosyl-L-homocysteine. Catalyzes the methyl esterification of L-isoaspartyl residues in peptides and proteins that result from spontaneous decomposition of normal L-aspartyl and L-asparaginyl residues. It plays a role in the repair and/or degradation of damaged proteins. This chain is Protein-L-isoaspartate O-methyltransferase, found in Escherichia coli O7:K1 (strain IAI39 / ExPEC).